The following is a 200-amino-acid chain: Dephospho-CoA kinase (200 aa).

One can recognise a DPCK domain in the interval 4–200; the sequence is VIGLTGGIAS…VILKNWNIID (197 aa). Position 12 to 17 (12 to 17) interacts with ATP; that stretch reads ASGKST.

This sequence belongs to the CoaE family.

It is found in the cytoplasm. It carries out the reaction 3'-dephospho-CoA + ATP = ADP + CoA + H(+). Its pathway is cofactor biosynthesis; coenzyme A biosynthesis; CoA from (R)-pantothenate: step 5/5. In terms of biological role, catalyzes the phosphorylation of the 3'-hydroxyl group of dephosphocoenzyme A to form coenzyme A. The sequence is that of Dephospho-CoA kinase from Bacillus cereus (strain ATCC 10987 / NRS 248).